The sequence spans 554 residues: Glucose-6-phosphate isomerase (554 aa).

E359 serves as the catalytic Proton donor. Residues H390 and K518 contribute to the active site.

Belongs to the GPI family.

The protein resides in the cytoplasm. The enzyme catalyses alpha-D-glucose 6-phosphate = beta-D-fructose 6-phosphate. The protein operates within carbohydrate biosynthesis; gluconeogenesis. Its pathway is carbohydrate degradation; glycolysis; D-glyceraldehyde 3-phosphate and glycerone phosphate from D-glucose: step 2/4. In terms of biological role, catalyzes the reversible isomerization of glucose-6-phosphate to fructose-6-phosphate. This chain is Glucose-6-phosphate isomerase, found in Stutzerimonas stutzeri (strain A1501) (Pseudomonas stutzeri).